Consider the following 902-residue polypeptide: Transcription factor E2F7 (902 aa).

Residue Ser-96 is modified to Phosphoserine. A DNA-binding region spans residues 143–212 (RKQKSLGLLC…VAKNQYGWHG (70 aa)). Basic and acidic residues predominate over residues 253-269 (ERRKDGSPDPRDQHLLD). A disordered region spans residues 253–283 (ERRKDGSPDPRDQHLLDFSESDYPSSSANSR). The DNA-binding element occupies 283–368 (RKDKSLRIMS…GRKPAFKWIG (86 aa)). Ser-411 carries the post-translational modification Phosphoserine. Disordered stretches follow at residues 418–439 (SEKI…KQGP), 589–627 (LCEE…SNST), and 665–690 (NGFI…DNEI). Composition is skewed to basic and acidic residues over residues 589–611 (LCEE…REFE) and 679–690 (PDTEKSSNDNEI). Ser-832 is subject to Phosphoserine. Positions 844 to 902 (KAEQSPAPATPKSIQRRHRETFFKTPGSLGDPAFRRERNQSRNTSSAQRRLEISSSGPD) are disordered. Polar residues predominate over residues 884-902 (SRNTSSAQRRLEISSSGPD).

The protein belongs to the E2F/DP family. Homodimer and heterodimer: mainly forms homodimers and, to a lesser extent, heterodimers with E2F8. Dimerization is important for DNA-binding. Interacts with HIF1A. Interacts with MN1.

Its subcellular location is the nucleus. Functionally, atypical E2F transcription factor that participates in various processes such as angiogenesis, polyploidization of specialized cells and DNA damage response. Mainly acts as a transcription repressor that binds DNA independently of DP proteins and specifically recognizes the E2 recognition site 5'-TTTC[CG]CGC-3'. Directly represses transcription of classical E2F transcription factors such as E2F1. Acts as a regulator of S-phase by recognizing and binding the E2-related site 5'-TTCCCGCC-3' and mediating repression of G1/S-regulated genes. Plays a key role in polyploidization of cells in placenta and liver by regulating the endocycle, probably by repressing genes promoting cytokinesis and antagonizing action of classical E2F proteins (E2F1, E2F2 and/or E2F3). Required for placental development by promoting polyploidization of trophoblast giant cells. Also involved in DNA damage response: up-regulated by p53/TP53 following genotoxic stress and acts as a downstream effector of p53/TP53-dependent repression by mediating repression of indirect p53/TP53 target genes involved in DNA replication. Acts as a promoter of sprouting angiogenesis, possibly by acting as a transcription activator: associates with HIF1A, recognizes and binds the VEGFA promoter, which is different from canonical E2 recognition site, and activates expression of the VEGFA gene. Acts as a negative regulator of keratinocyte differentiation. This chain is Transcription factor E2F7 (E2f7), found in Rattus norvegicus (Rat).